The primary structure comprises 407 residues: Imidazolonepropionase (407 aa).

Residues histidine 72 and histidine 74 each contribute to the Fe(3+) site. Zn(2+) is bound by residues histidine 72 and histidine 74. 4-imidazolone-5-propanoate-binding residues include arginine 81, tyrosine 144, and histidine 177. Tyrosine 144 serves as a coordination point for N-formimidoyl-L-glutamate. Residue histidine 242 coordinates Fe(3+). A Zn(2+)-binding site is contributed by histidine 242. Glutamine 245 is a 4-imidazolone-5-propanoate binding site. Position 317 (aspartate 317) interacts with Fe(3+). Zn(2+) is bound at residue aspartate 317. Positions 319 and 321 each coordinate N-formimidoyl-L-glutamate. Residue threonine 322 participates in 4-imidazolone-5-propanoate binding.

It belongs to the metallo-dependent hydrolases superfamily. HutI family. Zn(2+) serves as cofactor. Fe(3+) is required as a cofactor.

The protein resides in the cytoplasm. The enzyme catalyses 4-imidazolone-5-propanoate + H2O = N-formimidoyl-L-glutamate. The protein operates within amino-acid degradation; L-histidine degradation into L-glutamate; N-formimidoyl-L-glutamate from L-histidine: step 3/3. Catalyzes the hydrolytic cleavage of the carbon-nitrogen bond in imidazolone-5-propanoate to yield N-formimidoyl-L-glutamate. It is the third step in the universal histidine degradation pathway. This is Imidazolonepropionase from Aliivibrio salmonicida (strain LFI1238) (Vibrio salmonicida (strain LFI1238)).